Consider the following 280-residue polypeptide: Elongation factor Ts (280 aa).

The interval 79–82 (TDFV) is involved in Mg(2+) ion dislocation from EF-Tu.

This sequence belongs to the EF-Ts family.

It is found in the cytoplasm. Associates with the EF-Tu.GDP complex and induces the exchange of GDP to GTP. It remains bound to the aminoacyl-tRNA.EF-Tu.GTP complex up to the GTP hydrolysis stage on the ribosome. The chain is Elongation factor Ts from Vibrio cholerae serotype O1 (strain ATCC 39541 / Classical Ogawa 395 / O395).